A 52-amino-acid polypeptide reads, in one-letter code: Insulin (52 aa).

Disulfide bonds link Cys-9–Cys-38, Cys-21–Cys-51, and Cys-37–Cys-42.

Belongs to the insulin family. In terms of assembly, heterodimer of a B chain and an A chain linked by two disulfide bonds.

It localises to the secreted. Insulin decreases blood glucose concentration. It increases cell permeability to monosaccharides, amino acids and fatty acids. It accelerates glycolysis, the pentose phosphate cycle, and glycogen synthesis in liver. This Piaractus mesopotamicus (Small-scaled pacu) protein is Insulin (ins).